The chain runs to 167 residues: Protein FimG (167 aa).

The signal sequence occupies residues 1 to 23 (MKWCKRGYVLAAILALASATIQA). Cysteine 39 and cysteine 77 form a disulfide bridge.

The protein belongs to the fimbrial protein family.

The protein resides in the fimbrium. Functionally, involved in regulation of length and mediation of adhesion of type 1 fimbriae (but not necessary for the production of fimbriae). Involved in the integration of FimH in the fimbriae. The protein is Protein FimG (fimG) of Escherichia coli (strain K12).